Reading from the N-terminus, the 280-residue chain is Monoacylglycerol lipase (280 aa).

The active-site Nucleophile is the S111. Active-site charge relay system residues include D227 and H257.

It belongs to the AB hydrolase superfamily.

It is found in the secreted. The protein resides in the cell wall. It catalyses the reaction Hydrolyzes glycerol monoesters of long-chain fatty acids.. Its function is as follows. Contributes to cell growth, probably by hydrolyzing exogenous lipids. Catalyzes the hydrolysis of monoacylglycerols (MAG) with fatty acid chains ranging from C14 to C18, with a maximum activity on monoolein. Is unable to hydrolyze long-chain diacylglycerol (DAG). The sequence is that of Monoacylglycerol lipase from Mycolicibacterium smegmatis (strain ATCC 700084 / mc(2)155) (Mycobacterium smegmatis).